A 1008-amino-acid chain; its full sequence is Histone deacetylase complex subunit SAP130-A (1008 aa).

Residues 1 to 31 (MNSQQFPRQAASMPSPQVSNSGASVGQNVQG) show a composition bias toward polar residues. 4 disordered regions span residues 1-44 (MNSQ…DVQS), 113-134 (SKST…SAVP), 415-435 (IQSD…HRAS), and 617-720 (TPGG…PATI). The segment covering 35-44 (EVARDMDVQS) has biased composition (basic and acidic residues). Polar residues predominate over residues 618–644 (PGGTTVMQSHSQSPGIGSSPAQGSSPR). Over residues 678 to 697 (ADQPSAAASLPSSHHPAAAV) the composition is skewed to low complexity.

It belongs to the SAP130 family.

The protein resides in the nucleus. In terms of biological role, acts as a transcriptional repressor. This Xenopus laevis (African clawed frog) protein is Histone deacetylase complex subunit SAP130-A (sap130-a).